The following is a 568-amino-acid chain: Protein phosphatase 1 regulatory inhibitor subunit 16B (568 aa).

Residues 15 to 55 (EKVPTLERLRAAQKRRAQQLKKWAQYEQDLQHRKRKHERKR) adopt a coiled-coil conformation. Serine 69 bears the Phosphoserine mark. ANK repeat units follow at residues 100 to 129 (DGLT…NVNA), 133 to 162 (ELWT…DLLA), 228 to 257 (QGAT…RVDV), and 261 to 290 (DGWE…SLSA). Residues 327-346 (RHKSSLSRRTSSAGSRGKVV) are disordered. Phosphoserine occurs at positions 333, 337, and 350. Over residues 333–342 (SRRTSSAGSR) the composition is skewed to low complexity. A disordered region spans residues 373–404 (SASEDQRNSTYNGDIRETRTDQENKDPNPRLE). Positions 386 to 404 (DIRETRTDQENKDPNPRLE) are enriched in basic and acidic residues. Serine 477 is subject to Phosphoserine. The disordered stretch occupies residues 504–525 (GSGVSRTGEGSSEGKAPLIGGR). The stretch at 531–560 (SNGTSVYYTVTSGDPPLLKFKAPIEEMEEK) is one ANK 5 repeat. Cysteine 564 carries the S-palmitoyl cysteine lipid modification. Cysteine methyl ester is present on cysteine 565. Residue cysteine 565 is the site of S-farnesyl cysteine attachment. Positions 566 to 568 (RIS) are cleaved as a propeptide — removed in mature form.

Interacts with PPP1CA, PPP1CB and MSN. Interacts (via its fourth ankyrin repeat) with the mature dimeric form of RPSA/LAMR1. Interacts with EEF1A1. Interacts with PTEN. Interacts with ECE1. Post-translationally, phosphorylated by PKA and, after PKA priming, by GSK3B. Phosphorylation by GSK3B reduces its association with PP1C and enhances PP1C activity. Dephosphorylation by its associated PP1C results in enhanced association with PP1C, but reduced PP1C activity.

Its subcellular location is the cell membrane. The protein resides in the nucleus. The protein localises to the cell projection. In terms of biological role, regulator of protein phosphatase 1 (PP1) that acts as a positive regulator of pulmonary endothelial cell (EC) barrier function. Protects the endothelial barrier from lipopolysaccharide (LPS)-induced vascular leakage. Involved in the regulation of the PI3K/AKT signaling pathway. Involved in the regulation of angiogenesis and endothelial cell proliferation through the control of ECE1 dephosphorylation, trafficking and activity. Involved in the regulation of endothelial cell filopodia extension. May be a downstream target for TGF-beta1 signaling cascade in endothelial cells. Involved in PKA-mediated moesin dephosphorylation which is important in EC barrier protection against thrombin stimulation. Promotes the interaction of PPP1CA with RPSA/LAMR1 and in turn facilitates the dephosphorylation of RPSA/LAMR1. Involved in the dephosphorylation of EEF1A1. The sequence is that of Protein phosphatase 1 regulatory inhibitor subunit 16B (PPP1R16B) from Bos taurus (Bovine).